Consider the following 330-residue polypeptide: uncharacterized protein (330 aa).

Residue H257 is part of the active site.

Belongs to the IUNH family.

This is an uncharacterized protein from Schizosaccharomyces pombe (strain 972 / ATCC 24843) (Fission yeast).